The primary structure comprises 250 residues: 2,3-bisphosphoglycerate-dependent phosphoglycerate mutase (250 aa).

Substrate is bound by residues arginine 10 to asparagine 17, threonine 23 to glycine 24, arginine 62, glutamate 89 to tyrosine 92, lysine 100, arginine 116 to arginine 117, and glycine 185 to asparagine 186. Histidine 11 (tele-phosphohistidine intermediate) is an active-site residue. Glutamate 89 serves as the catalytic Proton donor/acceptor.

Belongs to the phosphoglycerate mutase family. BPG-dependent PGAM subfamily. As to quaternary structure, homodimer.

It catalyses the reaction (2R)-2-phosphoglycerate = (2R)-3-phosphoglycerate. It participates in carbohydrate degradation; glycolysis; pyruvate from D-glyceraldehyde 3-phosphate: step 3/5. Its function is as follows. Catalyzes the interconversion of 2-phosphoglycerate and 3-phosphoglycerate. This Pectobacterium carotovorum subsp. carotovorum (strain PC1) protein is 2,3-bisphosphoglycerate-dependent phosphoglycerate mutase.